A 535-amino-acid chain; its full sequence is BAR/IMD domain-containing adapter protein 2 (535 aa).

The 250-residue stretch at 1–250 folds into the IMD domain; that stretch reads MSLSRSEEMH…AQLMQQMANS (250 aa). Residues 1-251 adopt a coiled-coil conformation; it reads MSLSRSEEMH…QLMQQMANSN (251 aa). Residues Ser262, Ser324, Ser326, and Ser337 each carry the phosphoserine modification. The disordered stretch occupies residues 308–370; it reads SEDYNPWADR…TLPRSSSMAA (63 aa). Residues 321–335 show a composition bias toward low complexity; that stretch reads QPKSLSPPQSQSKLS. Thr341 carries the phosphothreonine modification. A Phosphoserine modification is found at Ser347. The span at 349–368 shows a compositional bias: polar residues; it reads TPKNSYATTENKTLPRSSSM. Position 361 is a phosphothreonine (Thr361). Ser367, Ser385, Ser396, and Ser455 each carry phosphoserine. One can recognise an SH3 domain in the interval 375-438; that stretch reads NGRMRVKAIF…PFSYTRVLDS (64 aa). The interval 445-486 is disordered; sequence HMSLQQGKSSSTGNLLDKDDLALPPPDYGTSSRAFPSQTAGT. Composition is skewed to polar residues over residues 447–458 and 473–486; these read SLQQGKSSSTGN and GTSS…TAGT.

As to quaternary structure, homodimer. Interacts with CDC42 and RAC1 that have been activated by GTP binding. Binds TIAM1. Interacts with ATN1, ADGRB1, DIAPH1, EPS8, SHANK1, SHANK2, SHANK3, WASF1 and WASF2. Interacts with ENAH after recruitment of CDC42. In terms of processing, phosphorylated on tyrosine residues by INSR in response to insulin treatment. As to expression, ubiquitous.

It is found in the cytoplasm. Its subcellular location is the membrane. The protein resides in the cell projection. It localises to the filopodium. The protein localises to the ruffle. It is found in the cytoskeleton. Its function is as follows. Adapter protein that links membrane-bound small G-proteins to cytoplasmic effector proteins. Necessary for CDC42-mediated reorganization of the actin cytoskeleton and for RAC1-mediated membrane ruffling. Involved in the regulation of the actin cytoskeleton by WASF family members and the Arp2/3 complex. Plays a role in neurite growth. Acts syngeristically with ENAH to promote filipodia formation. Plays a role in the reorganization of the actin cytoskeleton in response to bacterial infection. Participates in actin bundling when associated with EPS8, promoting filopodial protrusions. The polypeptide is BAR/IMD domain-containing adapter protein 2 (Baiap2) (Rattus norvegicus (Rat)).